Consider the following 158-residue polypeptide: Transcriptional regulator MraZ (158 aa).

SpoVT-AbrB domains follow at residues 5–50 (IYET…GGVY) and 91–134 (AVEC…SQSE).

Belongs to the MraZ family. Forms oligomers.

Its subcellular location is the cytoplasm. It is found in the nucleoid. This Geobacter metallireducens (strain ATCC 53774 / DSM 7210 / GS-15) protein is Transcriptional regulator MraZ.